A 364-amino-acid polypeptide reads, in one-letter code: D-alanine--D-alanine ligase (364 aa).

The 210-residue stretch at 145 to 354 (KMAFEQAGLP…FPELVDKLVQ (210 aa)) folds into the ATP-grasp domain. 181-236 (EASLGYPCFVKPANLGSSVGISKVRSRQELEDALDNAANYDRRIIIEAGVAAREVE) lines the ATP pocket. 3 residues coordinate Mg(2+): aspartate 307, glutamate 321, and asparagine 323.

The protein belongs to the D-alanine--D-alanine ligase family. The cofactor is Mg(2+). It depends on Mn(2+) as a cofactor.

It localises to the cytoplasm. The enzyme catalyses 2 D-alanine + ATP = D-alanyl-D-alanine + ADP + phosphate + H(+). It participates in cell wall biogenesis; peptidoglycan biosynthesis. Its function is as follows. Cell wall formation. The polypeptide is D-alanine--D-alanine ligase (Nostoc sp. (strain PCC 7120 / SAG 25.82 / UTEX 2576)).